The sequence spans 26 residues: Glycyl-poneratoxin (26 aa).

Arg25 bears the Arginine amide; in delta-paraponeritoxin-Pc1a mark.

The glycine-PoTx is a non-amidated form of poneratoxin, with an extra-Gly at C-terminus. This loss of amidation does not alter toxin activity on Nav1.7/SCN9A. Expressed by the venom gland.

Its subcellular location is the secreted. Functionally, toxin that causes pain in vertebrates by targeting tetrodotoxin (TTX)-sensitive sodium channels in peripheral sensory neurons. Also blocks synaptic transmission and stimulates smooth muscle contraction. Converts the normally rapidly activating and inactivating sodium channel current into one that does not inactivate. Is active on both Nav1.6/SCN8A and Nav1.7/SCN9A sodium channels, with a much potent activity on Nav1.6/SCN8A (EC(50)=97 nM on human channels) than on Nav1.7/SCN9A (EC(50)=2.3 uM on human and EC(50)=1.8 uM on mouse channels). On these channels, causes a sustained current, a reduction in peak current amplitude and a hyperpolarising shift. Modulates Nav1.7/SCN9A in a non-competitive manner with TTX or tetracaine. Toxin-induced persistant current is very slowly reversible with repeated wash steps over 30 minutes. In vivo, shallow intraplantar injection in mice causes immediate, long-lasting and near-maximal nocifensive behaviors, which decrease with coinjection of TTX. When tested on insects, causes paralysis but not mortality at high doses. The sequence is that of Glycyl-poneratoxin from Paraponera clavata (Bullet ant).